Consider the following 397-residue polypeptide: Serpin B10 (397 aa).

Positions 74 to 77 match the Nuclear localization signal motif; the sequence is KKRK.

The protein belongs to the serpin family. Ov-serpin subfamily.

It localises to the nucleus. Its subcellular location is the cytoplasm. Its function is as follows. Protease inhibitor that may play a role in the regulation of protease activities during hematopoiesis and apoptosis induced by TNF. May regulate protease activities in the cytoplasm and in the nucleus. The protein is Serpin B10 (SERPINB10) of Bos taurus (Bovine).